The sequence spans 130 residues: Aspartate 1-decarboxylase (130 aa).

Catalysis depends on serine 25, which acts as the Schiff-base intermediate with substrate; via pyruvic acid. At serine 25 the chain carries Pyruvic acid (Ser). Residue threonine 57 coordinates substrate. Tyrosine 58 acts as the Proton donor in catalysis. Residue 73-75 (GAT) coordinates substrate.

It belongs to the PanD family. In terms of assembly, heterooctamer of four alpha and four beta subunits. It depends on pyruvate as a cofactor. In terms of processing, is synthesized initially as an inactive proenzyme, which is activated by self-cleavage at a specific serine bond to produce a beta-subunit with a hydroxyl group at its C-terminus and an alpha-subunit with a pyruvoyl group at its N-terminus.

It localises to the cytoplasm. The catalysed reaction is L-aspartate + H(+) = beta-alanine + CO2. It participates in cofactor biosynthesis; (R)-pantothenate biosynthesis; beta-alanine from L-aspartate: step 1/1. Functionally, catalyzes the pyruvoyl-dependent decarboxylation of aspartate to produce beta-alanine. In Lactiplantibacillus plantarum (strain ATCC BAA-793 / NCIMB 8826 / WCFS1) (Lactobacillus plantarum), this protein is Aspartate 1-decarboxylase.